The chain runs to 100 residues: NADH-quinone oxidoreductase subunit K (100 aa).

The next 3 membrane-spanning stretches (helical) occupy residues 4–24 (VTWYLWLAAMLFTIGLSGVLL), 29–49 (LIVMMSVELMLNAANLTFLAF), and 61–81 (IAFFVIAVAAAEAAVGLAVVI).

It belongs to the complex I subunit 4L family. As to quaternary structure, NDH-1 is composed of 14 different subunits. Subunits NuoA, H, J, K, L, M, N constitute the membrane sector of the complex.

It localises to the cell inner membrane. The catalysed reaction is a quinone + NADH + 5 H(+)(in) = a quinol + NAD(+) + 4 H(+)(out). NDH-1 shuttles electrons from NADH, via FMN and iron-sulfur (Fe-S) centers, to quinones in the respiratory chain. The immediate electron acceptor for the enzyme in this species is believed to be ubiquinone. Couples the redox reaction to proton translocation (for every two electrons transferred, four hydrogen ions are translocated across the cytoplasmic membrane), and thus conserves the redox energy in a proton gradient. In Anaeromyxobacter sp. (strain Fw109-5), this protein is NADH-quinone oxidoreductase subunit K.